We begin with the raw amino-acid sequence, 353 residues long: Guanine nucleotide-binding protein subunit beta-5 (353 aa).

WD repeat units follow at residues 61–100 (GHGNKVLCMDWCKDKRRIVSSSQDGKVIVWDSFTTNKEHA), 103–142 (MPCTWVMACAYAPSGCAIACGGLDNKCSVYPLTFDKNENM), 151–192 (MHTN…QSFH), 194–236 (HGAD…QAFE), 237–276 (THESDVNSVRYYPSGDAFASGSDDATCRLYDLRADREVAI), 278–320 (SKES…RVSI), and 323–352 (GHENRVSTLRVSPDGTAFCSGSWDHTLRVW).

Belongs to the WD repeat G protein beta family. As to quaternary structure, component of a complex composed of RGS9 (isoform RGS9-1), GNB5 and RGS9BP; within this complex, the presence of GNB5 stabilizes both itself and RGS9 and increases RGS9 GTPase-activating protein (GAP) activity. Interacts with RGS7, forming the RGS7-GNB5 complex; within this complex, the presence of GNB5 increases RGS7 GTPase-activating protein (GAP) activity. Interacts with GPR158; promotes the GTPase activator activity of the RGS7-GNB5 complex in absence of glycine, in contrast GTPase activator activity of the RGS7-GNB5 complex is inhibited in presence of glycine. Interacts with RGS6. Detected in brain.

The protein resides in the membrane. Functionally, enhances GTPase-activating protein (GAP) activity of regulator of G protein signaling (RGS) proteins, such as RGS7 and RGS9, hence involved in the termination of the signaling initiated by the G protein coupled receptors (GPCRs) by accelerating the GTP hydrolysis on the G-alpha subunits, thereby promoting their inactivation. Increases RGS7 GTPase-activating protein (GAP) activity, thereby regulating mood and cognition. Increases RGS9 GTPase-activating protein (GAP) activity, hence contributes to the deactivation of G protein signaling initiated by D(2) dopamine receptors. May play an important role in neuronal signaling, including in the parasympathetic, but not sympathetic, control of heart rate. This is Guanine nucleotide-binding protein subunit beta-5 (Gnb5) from Rattus norvegicus (Rat).